A 205-amino-acid chain; its full sequence is dTTP/UTP pyrophosphatase (205 aa).

D71 (proton acceptor) is an active-site residue.

It belongs to the Maf family. YhdE subfamily. The cofactor is a divalent metal cation.

The protein resides in the cytoplasm. It catalyses the reaction dTTP + H2O = dTMP + diphosphate + H(+). The enzyme catalyses UTP + H2O = UMP + diphosphate + H(+). In terms of biological role, nucleoside triphosphate pyrophosphatase that hydrolyzes dTTP and UTP. May have a dual role in cell division arrest and in preventing the incorporation of modified nucleotides into cellular nucleic acids. The protein is dTTP/UTP pyrophosphatase of Syntrophus aciditrophicus (strain SB).